We begin with the raw amino-acid sequence, 177 residues long: ATP synthase subunit delta (177 aa).

It belongs to the ATPase delta chain family. F-type ATPases have 2 components, F(1) - the catalytic core - and F(0) - the membrane proton channel. F(1) has five subunits: alpha(3), beta(3), gamma(1), delta(1), epsilon(1). F(0) has three main subunits: a(1), b(2) and c(10-14). The alpha and beta chains form an alternating ring which encloses part of the gamma chain. F(1) is attached to F(0) by a central stalk formed by the gamma and epsilon chains, while a peripheral stalk is formed by the delta and b chains.

The protein localises to the cell inner membrane. Functionally, f(1)F(0) ATP synthase produces ATP from ADP in the presence of a proton or sodium gradient. F-type ATPases consist of two structural domains, F(1) containing the extramembraneous catalytic core and F(0) containing the membrane proton channel, linked together by a central stalk and a peripheral stalk. During catalysis, ATP synthesis in the catalytic domain of F(1) is coupled via a rotary mechanism of the central stalk subunits to proton translocation. In terms of biological role, this protein is part of the stalk that links CF(0) to CF(1). It either transmits conformational changes from CF(0) to CF(1) or is implicated in proton conduction. The protein is ATP synthase subunit delta of Shewanella amazonensis (strain ATCC BAA-1098 / SB2B).